We begin with the raw amino-acid sequence, 418 residues long: CinA-like protein (418 aa).

This sequence belongs to the CinA family.

The polypeptide is CinA-like protein (Leptospira borgpetersenii serovar Hardjo-bovis (strain L550)).